The following is a 130-amino-acid chain: Small ribosomal subunit protein uS9 (130 aa).

The protein belongs to the universal ribosomal protein uS9 family.

The sequence is that of Small ribosomal subunit protein uS9 from Ectopseudomonas mendocina (strain ymp) (Pseudomonas mendocina).